Reading from the N-terminus, the 597-residue chain is Nuclear receptor subfamily 4 group A member 1 (597 aa).

The segment at 1–22 (MPCIQAQYGTPATSPGPRDHLT) is disordered. Residues 170-465 (RVWTEQLPKA…PGEGKLIFCS (296 aa)) form a required for nuclear import region. Positions 263 to 338 (EGRCAVCGDN…VGMVKEVVRT (76 aa)) form a DNA-binding region, nuclear receptor. NR C4-type zinc fingers lie at residues 266–286 (CAVC…CEGC) and 302–326 (CLAN…FQKC). The tract at residues 267–353 (AVCGDNASCQ…RRGRLPSKPK (87 aa)) is required for binding NBRE-containing DNA. Residues 298–360 (AKYICLANKD…KPKQPPDASP (63 aa)) form a required for the interaction with RXRA region. Ser-340 is subject to Phosphoserine; by PKA. Residues 341–360 (LKGRRGRLPSKPKQPPDASP) are disordered. At Ser-350 the chain carries Phosphoserine; by PKA, RPS6KA1 and RPS6KA3. In terms of domain architecture, NR LBD spans 359–594 (SPTNLLTSLI…PIVDKIFMDT (236 aa)). Residues 520–543 (PRRVEELQNRIASCLKEHMAAVAG) form a binds lipopolysaccharide region. The AF-2 stretch occupies residues 583–594 (PPPIVDKIFMDT).

The protein belongs to the nuclear hormone receptor family. NR4 subfamily. As to quaternary structure, binds the NGFI-B response element (NBRE) as a monomer. Binds the Nur response element (NurRE), consisting of two inverse NBRE-related octanucleotide repeats separated by 6 base-pairs, as a dimer. Interacts (via N-terminus) with NLRP3 (via LRR repeat domain); the interaction is direct, requires binding of NR4A1/Nur77 to NBRE-containing dsDNA and lipopolysaccharide, and leads to non-canonical NLRP3 inflammasome activation. Interacts with GADD45GIP1. Interacts with STK11. Interacts with IFI27. Heterodimer (via DNA-binding domain) with RXRA (via C-terminus); DNA-binding of the heterodimer is enhanced by 9-cis retinoic acid. Competes for the RXRA interaction with EP300 and thereby attenuates EP300 mediated acetylation of RXRA. Interacts with NCOA1. Interacts with NCOA2. Interacts with NCOA3. Requires Zn(2+) as cofactor. Post-translationally, phosphorylated at Ser-350 by RPS6KA1 and RPS6KA3 in response to mitogenic or stress stimuli. Phosphorylation of Ser-350 results in decrease in NBRE binding while phosphorylation of Ser-340 has little effect on it. Acetylated by p300/CBP, acetylation increases stability. Deacetylated by HDAC1. In terms of tissue distribution, expressed in lung, brain and superior cervical ganglia. High levels are seen in the adrenal tissue.

It localises to the nucleus. It is found in the cytoplasm. The protein resides in the cytosol. Its subcellular location is the mitochondrion. In terms of biological role, orphan nuclear receptor. Binds the NGFI-B response element (NBRE) 5'-AAAGGTCA-3'. Binds 9-cis-retinoic acid outside of its ligand-binding (NR LBD) domain. Participates in energy homeostasis by sequestrating the kinase STK11 in the nucleus, thereby attenuating cytoplasmic AMPK activation. Regulates the inflammatory response in macrophages by regulating metabolic adaptations during inflammation, including repressing the transcription of genes involved in the citric acid cycle (TCA). Inhibits NF-kappa-B signaling by binding to low-affinity NF-kappa-B binding sites, such as at the IL2 promoter. May act concomitantly with NR4A2 in regulating the expression of delayed-early genes during liver regeneration. Plays a role in the vascular response to injury. Its function is as follows. In the cytosol, upon its detection of both bacterial lipopolysaccharide (LPS) and NBRE-containing mitochondrial DNA released by GSDMD pores during pyroptosis, it promotes non-canonical NLRP3 inflammasome activation by stimulating association of NLRP3 and NEK7. This is Nuclear receptor subfamily 4 group A member 1 (Nr4a1) from Rattus norvegicus (Rat).